Consider the following 101-residue polypeptide: Small ribosomal subunit protein bS6 (101 aa).

The protein belongs to the bacterial ribosomal protein bS6 family.

In terms of biological role, binds together with bS18 to 16S ribosomal RNA. This Micrococcus luteus (strain ATCC 4698 / DSM 20030 / JCM 1464 / CCM 169 / CCUG 5858 / IAM 1056 / NBRC 3333 / NCIMB 9278 / NCTC 2665 / VKM Ac-2230) (Micrococcus lysodeikticus) protein is Small ribosomal subunit protein bS6.